The sequence spans 361 residues: 5-formaminoimidazole-4-carboxamide-1-(beta)-D-ribofuranosyl 5'-monophosphate synthetase (361 aa).

5-amino-1-(5-phospho-beta-D-ribosyl)imidazole-4-carboxamide-binding residues include H27 and S94. An ATP-grasp domain is found at 116 to 348 (RRILRWESER…MGQRIAREIK (233 aa)). Residues 156–166 (KFPGARGGRGY), 199–202 (EEYV), and E230 contribute to the ATP site. N258 provides a ligand contact to 5-amino-1-(5-phospho-beta-D-ribosyl)imidazole-4-carboxamide. Mg(2+) is bound by residues Q297 and E310.

This sequence belongs to the phosphohexose mutase family. In terms of assembly, homohexamer. Dimer of trimers. It depends on Mg(2+) as a cofactor. Requires Mn(2+) as cofactor.

The catalysed reaction is 5-amino-1-(5-phospho-beta-D-ribosyl)imidazole-4-carboxamide + formate + ATP = 5-formamido-1-(5-phospho-D-ribosyl)imidazole-4-carboxamide + ADP + phosphate. It participates in purine metabolism; IMP biosynthesis via de novo pathway; 5-formamido-1-(5-phospho-D-ribosyl)imidazole-4-carboxamide from 5-amino-1-(5-phospho-D-ribosyl)imidazole-4-carboxamide (formate route): step 1/1. Inhibited by ADP. Its function is as follows. Catalyzes the ATP- and formate-dependent formylation of 5-aminoimidazole-4-carboxamide-1-beta-d-ribofuranosyl 5'-monophosphate (AICAR) to 5-formaminoimidazole-4-carboxamide-1-beta-d-ribofuranosyl 5'-monophosphate (FAICAR) in the absence of folates. The sequence is that of 5-formaminoimidazole-4-carboxamide-1-(beta)-D-ribofuranosyl 5'-monophosphate synthetase from Methanocaldococcus jannaschii (strain ATCC 43067 / DSM 2661 / JAL-1 / JCM 10045 / NBRC 100440) (Methanococcus jannaschii).